The sequence spans 67 residues: Large ribosomal subunit protein bL35 (67 aa).

Over residues 1 to 16 (MPKMKTKKSAAKRFRV) the composition is skewed to basic residues. The tract at residues 1–22 (MPKMKTKKSAAKRFRVRPGGTV) is disordered.

It belongs to the bacterial ribosomal protein bL35 family.

The protein is Large ribosomal subunit protein bL35 of Methylibium petroleiphilum (strain ATCC BAA-1232 / LMG 22953 / PM1).